A 214-amino-acid polypeptide reads, in one-letter code: Ribonuclease P protein component 3 (214 aa).

The protein belongs to the eukaryotic/archaeal RNase P protein component 3 family. Consists of a catalytic RNA component and at least 4-5 protein subunits.

The protein resides in the cytoplasm. It carries out the reaction Endonucleolytic cleavage of RNA, removing 5'-extranucleotides from tRNA precursor.. In terms of biological role, part of ribonuclease P, a protein complex that generates mature tRNA molecules by cleaving their 5'-ends. The chain is Ribonuclease P protein component 3 from Thermococcus gammatolerans (strain DSM 15229 / JCM 11827 / EJ3).